The chain runs to 1894 residues: Adenylate kinase 9 (1894 aa).

The adenylate kinase 1 stretch occupies residues 32–286 (TCFIIFGKPG…LFMTVIERLK (255 aa)). 41 to 46 (GAGKTT) contributes to the ATP binding site. An NMP 1 region spans residues 61–90 (EALSVLEEHIAAEKETGAMLQSLLVSGHSI). 117–120 (EMPS) serves as a coordination point for AMP. Positions 161 to 206 (GQRQHSTTGYVYTREQWDPEIIESRRRKKRDFPKEGKSEEEEEEEE) are LID 1. The disordered stretch occupies residues 188–211 (KKRDFPKEGKSEEEEEEEEQEEEE). Residues 198-211 (SEEEEEEEEQEEEE) are compositionally biased toward acidic residues. Arginine 230 is an AMP binding site. Residues 451 to 478 (IKVVQQRLLNEKQAKQQEERTLKELQVQ) are a coiled coil. The segment at 492 to 533 (SEELPSLENTGSKLSSLEIGQEDKSKSETTITGDQVKDVSTE) is disordered. Residues 651 to 691 (LERLQEEAQAKKREEEEIRKVKEEELRLEEEKQRLMELATK) are a coiled coil. 2 disordered regions span residues 710–789 (PYPD…LGSE) and 876–911 (EEEAEDYQAETEIDEEQEEEEEEEEEGEEKIKEKRR). The span at 715 to 736 (PDNEAEEEVEDSEIHEESEAQE) shows a compositional bias: acidic residues. 2 stretches are compositionally biased toward basic and acidic residues: residues 757–768 (EGDHEPEAEFKP) and 777–789 (ETEKDPKEGLGSE). A compositionally biased stretch (acidic residues) spans 876–903 (EEEAEDYQAETEIDEEQEEEEEEEEEGE). Residues 976 to 1187 (LRICLLGPHG…VAKRRAELIL (212 aa)) form an adenylate kinase 2 region. 985-990 (GSGKTV) is a binding site for ATP. Positions 1005 to 1036 (QFDEFLQEKMLLKAERKFGPEFEDDSEEEQLV) are NMP 2. AMP-binding positions include 1034-1036 (QLV) and 1063-1066 (VQLT). The tract at residues 1108 to 1128 (DGFPRHPEEAQFLGERGFFPD) is LID 2. Over residues 1223–1241 (EFPKDEEEMSEEDEEQEAD) the composition is skewed to acidic residues. The tract at residues 1223–1243 (EFPKDEEEMSEEDEEQEADAT) is disordered. The segment at 1395–1584 (VRIMIVGPPK…VWNEVLKDIQ (190 aa)) is adenylate kinase 3. 1404–1409 (KSGKTT) lines the ATP pocket. The tract at residues 1424–1455 (SVGDALRGMLNNHPDSELSLMLNWHLHKGKTV) is NMP 3. Residues arginine 1430, 1482–1485 (GYPV), and glutamine 1489 contribute to the AMP site. Positions 1519 to 1533 (LEKKTEQSMSYPLHN) are LID 3.

This sequence belongs to the adenylate kinase family. Highly expressed in the testis.

Its subcellular location is the cytoplasm. The protein resides in the nucleus. The protein localises to the cell projection. It is found in the cilium. It localises to the flagellum. It carries out the reaction a ribonucleoside 5'-phosphate + ATP = a ribonucleoside 5'-diphosphate + ADP. The enzyme catalyses AMP + ATP = 2 ADP. It catalyses the reaction GTP + AMP = GDP + ADP. The catalysed reaction is CMP + ATP = CDP + ADP. It carries out the reaction GTP + CMP = CDP + GDP. The enzyme catalyses dAMP + ATP = dADP + ADP. It catalyses the reaction dCMP + ATP = dCDP + ADP. The catalysed reaction is a ribonucleoside 5'-diphosphate + ATP = a ribonucleoside 5'-triphosphate + ADP. It carries out the reaction CDP + ATP = CTP + ADP. The enzyme catalyses CDP + GTP = CTP + GDP. It catalyses the reaction GDP + ATP = GTP + ADP. The catalysed reaction is UDP + ATP = UTP + ADP. It carries out the reaction GTP + UDP = UTP + GDP. The enzyme catalyses dTDP + GTP = dTTP + GDP. It catalyses the reaction dCDP + ATP = dCTP + ADP. The catalysed reaction is dCDP + GTP = dCTP + GDP. It carries out the reaction dGDP + ATP = dGTP + ADP. The enzyme catalyses dTDP + ATP = dTTP + ADP. It catalyses the reaction dADP + GTP = dATP + GDP. In terms of biological role, broad-specificity nucleoside phosphate kinase involved in cellular nucleotide homeostasis by catalyzing nucleoside-phosphate interconversions. Similar to other adenylate kinases, preferentially catalyzes the phosphorylation of the nucleoside monophosphate AMP with ATP as phosphate donor to produce ADP. In vitro, can also catalyze the phosphorylation of CMP, dAMP and dCMP and use GTP as an alternate phosphate donor. Moreover, exhibits a diphosphate kinase activity, producing ATP, CTP, GTP, UTP, TTP, dATP, dCTP and dGTP from the corresponding diphosphate substrates with either ATP or GTP as phosphate donors. For this activity shows the following substrate preference CDP &gt; UDP &gt; ADP &gt; TDP. This is Adenylate kinase 9 from Mus musculus (Mouse).